Here is a 76-residue protein sequence, read N- to C-terminus: DNA-directed RNA polymerase subunit omega (76 aa).

The protein belongs to the RNA polymerase subunit omega family. In cyanobacteria the RNAP catalytic core is composed of 2 alpha, 1 beta, 1 beta', 1 gamma and 1 omega subunit. When a sigma factor is associated with the core the holoenzyme is formed, which can initiate transcription.

The enzyme catalyses RNA(n) + a ribonucleoside 5'-triphosphate = RNA(n+1) + diphosphate. Promotes RNA polymerase assembly. Latches the N- and C-terminal regions of the beta' subunit thereby facilitating its interaction with the beta and alpha subunits. The polypeptide is DNA-directed RNA polymerase subunit omega (Synechococcus elongatus (strain ATCC 33912 / PCC 7942 / FACHB-805) (Anacystis nidulans R2)).